Reading from the N-terminus, the 427-residue chain is V-type proton ATPase subunit C 2 (427 aa).

The interval 292 to 319 (HKVKVTPLGNPDRPAAGQTDRERESEGE) is disordered.

This sequence belongs to the V-ATPase C subunit family. In terms of assembly, V-ATPase is a heteromultimeric enzyme made up of two complexes: the ATP-hydrolytic V1 complex and the proton translocation V0 complex. The V1 complex consists of three catalytic AB heterodimers that form a heterohexamer, three peripheral stalks each consisting of EG heterodimers, one central rotor including subunits D and F, and the regulatory subunits C and H. The proton translocation complex V0 consists of the proton transport subunit a, a ring of proteolipid subunits c9c'', rotary subunit d, subunits e and f, and the accessory subunits ATP6AP1/Ac45 and ATP6AP2/PRR. Kidney and placenta.

In terms of biological role, subunit of the V1 complex of vacuolar(H+)-ATPase (V-ATPase), a multisubunit enzyme composed of a peripheral complex (V1) that hydrolyzes ATP and a membrane integral complex (V0) that translocates protons. V-ATPase is responsible for acidifying and maintaining the pH of intracellular compartments and in some cell types, is targeted to the plasma membrane, where it is responsible for acidifying the extracellular environment. Subunit C is necessary for the assembly of the catalytic sector of the enzyme and is likely to have a specific function in its catalytic activity. This is V-type proton ATPase subunit C 2 (ATP6V1C2) from Homo sapiens (Human).